Reading from the N-terminus, the 490-residue chain is Cytochrome P450 2C55 (490 aa).

Residue Cys435 participates in heme binding.

Belongs to the cytochrome P450 family. Requires heme as cofactor. Highest level in colon. Low levels in liver and small intestine.

It localises to the endoplasmic reticulum membrane. The protein resides in the microsome membrane. It catalyses the reaction an organic molecule + reduced [NADPH--hemoprotein reductase] + O2 = an alcohol + oxidized [NADPH--hemoprotein reductase] + H2O + H(+). In terms of biological role, metabolizes arachidonic acid mainly to 19-hydroxyeicosatetraenoic acid (HETE). The chain is Cytochrome P450 2C55 from Mus musculus (Mouse).